A 445-amino-acid chain; its full sequence is UPF0210 protein SSA_2018 (445 aa).

This sequence belongs to the UPF0210 family. In terms of assembly, homodimer.

The protein is UPF0210 protein SSA_2018 of Streptococcus sanguinis (strain SK36).